The following is a 412-amino-acid chain: MHVFNFLLFYPIFMSIYWIVGSIYYFFIKEKPFNRSLLVKSEHQQVEGISFLLACYNESETVQDTLSSVLSLEYPEKEIIIINDGSSDNTAEIIYDFKKNHDFKFVDLEVNRGKANALNEGIKQASYEYVMCLDADTVIDDDAPFYMIEDFKKNPKLGAVTGNPRIRNKSSILGKIQTIEYASIIGCIKRSQSLAGAINTISGVFTLFKKSALKDVGYWDTDMITEDIAVSWKLHLFDYEIKYEPRALCWMLVPETIGGLWKQRVRWAQGGHEVLLRDFWPTIKTKKLSLYILMFEQIASITWVYIVLCYLSFLVITANILDYTYLKYSFSIFFFSSFTMTFINIIQFTVALFIDSRYEKKNIVGLIFLSWYPTLYWVINAAVVIMAFPKALKRKKGGYATWSSPDRGNIQR.

Transmembrane regions (helical) follow at residues 7–28 (LLFY…YFFI), 298–320 (IASI…TANI), 332–354 (IFFF…ALFI), and 364–386 (VGLI…VVIM).

Belongs to the glycosyltransferase 2 family.

The protein resides in the cell membrane. Its function is as follows. N-acetylglucosaminyltransferase that catalyzes the polymerization of single monomer units of UDP-N-acetylglucosamine to produce the linear homomer poly-beta-1,6-N-acetyl-D-glucosamine (PNAG, also referred to as PIA), a biofilm adhesin polysaccharide. Requires IcaD for full activity. This Staphylococcus epidermidis (strain ATCC 35984 / DSM 28319 / BCRC 17069 / CCUG 31568 / BM 3577 / RP62A) protein is Poly-beta-1,6-N-acetyl-D-glucosamine synthase (icaA).